The following is a 264-amino-acid chain: Thymidylate synthase (264 aa).

Position 21 (arginine 21) interacts with dUMP. A (6R)-5,10-methylene-5,6,7,8-tetrahydrofolate-binding site is contributed by histidine 51. 126–127 is a dUMP binding site; sequence RR. Residue cysteine 146 is the Nucleophile of the active site. DUMP-binding positions include 166 to 169, asparagine 177, and 207 to 209; these read RSAD and HIY. Aspartate 169 serves as a coordination point for (6R)-5,10-methylene-5,6,7,8-tetrahydrofolate. Alanine 263 provides a ligand contact to (6R)-5,10-methylene-5,6,7,8-tetrahydrofolate.

The protein belongs to the thymidylate synthase family. Bacterial-type ThyA subfamily. Homodimer.

It localises to the cytoplasm. It catalyses the reaction dUMP + (6R)-5,10-methylene-5,6,7,8-tetrahydrofolate = 7,8-dihydrofolate + dTMP. It participates in pyrimidine metabolism; dTTP biosynthesis. In terms of biological role, catalyzes the reductive methylation of 2'-deoxyuridine-5'-monophosphate (dUMP) to 2'-deoxythymidine-5'-monophosphate (dTMP) while utilizing 5,10-methylenetetrahydrofolate (mTHF) as the methyl donor and reductant in the reaction, yielding dihydrofolate (DHF) as a by-product. This enzymatic reaction provides an intracellular de novo source of dTMP, an essential precursor for DNA biosynthesis. The polypeptide is Thymidylate synthase (Bacteroides fragilis (strain ATCC 25285 / DSM 2151 / CCUG 4856 / JCM 11019 / LMG 10263 / NCTC 9343 / Onslow / VPI 2553 / EN-2)).